Reading from the N-terminus, the 348-residue chain is NADH-quinone oxidoreductase subunit H 1 (348 aa).

The next 8 helical transmembrane spans lie at 11 to 31, 83 to 103, 136 to 156, 172 to 192, 208 to 228, 268 to 288, 289 to 309, and 324 to 344; these read IYYI…LLTV, FAFL…FAVI, VGVL…VLAG, SAQM…VFML, GAWY…CSLA, MVTV…GPAF, LPGW…CMWI, and LGWK…GIVV.

Belongs to the complex I subunit 1 family. NDH-1 is composed of 14 different subunits. Subunits NuoA, H, J, K, L, M, N constitute the membrane sector of the complex.

The protein localises to the cell inner membrane. It carries out the reaction a quinone + NADH + 5 H(+)(in) = a quinol + NAD(+) + 4 H(+)(out). NDH-1 shuttles electrons from NADH, via FMN and iron-sulfur (Fe-S) centers, to quinones in the respiratory chain. The immediate electron acceptor for the enzyme in this species is believed to be ubiquinone. Couples the redox reaction to proton translocation (for every two electrons transferred, four hydrogen ions are translocated across the cytoplasmic membrane), and thus conserves the redox energy in a proton gradient. This subunit may bind ubiquinone. The polypeptide is NADH-quinone oxidoreductase subunit H 1 (Geobacter sulfurreducens (strain ATCC 51573 / DSM 12127 / PCA)).